We begin with the raw amino-acid sequence, 141 residues long: Large ribosomal subunit protein uL11 (141 aa).

Belongs to the universal ribosomal protein uL11 family. As to quaternary structure, part of the ribosomal stalk of the 50S ribosomal subunit. Interacts with L10 and the large rRNA to form the base of the stalk. L10 forms an elongated spine to which L12 dimers bind in a sequential fashion forming a multimeric L10(L12)X complex. In terms of processing, one or more lysine residues are methylated.

Functionally, forms part of the ribosomal stalk which helps the ribosome interact with GTP-bound translation factors. This Geobacillus thermodenitrificans (strain NG80-2) protein is Large ribosomal subunit protein uL11.